A 177-amino-acid polypeptide reads, in one-letter code: NADH-quinone oxidoreductase subunit B (177 aa).

Residues Cys-56, Cys-57, Cys-121, and Cys-151 each coordinate [4Fe-4S] cluster.

Belongs to the complex I 20 kDa subunit family. In terms of assembly, NDH-1 is composed of 14 different subunits. Subunits NuoB, C, D, E, F, and G constitute the peripheral sector of the complex. [4Fe-4S] cluster is required as a cofactor.

Its subcellular location is the cell inner membrane. The catalysed reaction is a quinone + NADH + 5 H(+)(in) = a quinol + NAD(+) + 4 H(+)(out). Functionally, NDH-1 shuttles electrons from NADH, via FMN and iron-sulfur (Fe-S) centers, to quinones in the respiratory chain. Couples the redox reaction to proton translocation (for every two electrons transferred, four hydrogen ions are translocated across the cytoplasmic membrane), and thus conserves the redox energy in a proton gradient. The sequence is that of NADH-quinone oxidoreductase subunit B from Ruegeria pomeroyi (strain ATCC 700808 / DSM 15171 / DSS-3) (Silicibacter pomeroyi).